The primary structure comprises 164 residues: MKVASSSAAATAGPSCSLKAGRTAGEVVLGLSEQSVAISRCAGTRLPALLDEQQVNVLLYDMNGCYSRLKELVPTLPQNRKVSKVEILQHVIDYIRDLQLELNSESEVATAGGRGLPVRAPLSTLNGEISALAAEVRSESEYYIILLWETKATGGGCPPYFSGA.

The bHLH domain maps to 46–98; that stretch reads LPALLDEQQVNVLLYDMNGCYSRLKELVPTLPQNRKVSKVEILQHVIDYIRDL. The Nuclear export signal signature appears at 91 to 104; it reads VIDYIRDLQLELNS.

Heterodimer with other HLH proteins. Interacts with COPS5, IFI204, GATA4, NKX2-5, CLOCK and BMAL1. Isoform Short can form homodimers. Post-translationally, phosphorylated in vitro by PKA and PKC.

Its subcellular location is the cytoplasm. The protein localises to the nucleus. Functionally, transcriptional regulator (lacking a basic DNA binding domain) which negatively regulates the basic helix-loop-helix (bHLH) transcription factors by forming heterodimers and inhibiting their DNA binding and transcriptional activity. Implicated in regulating a variety of cellular processes, including cellular growth, senescence, differentiation, apoptosis, angiogenesis, and neoplastic transformation. Inhibits skeletal muscle and cardiac myocyte differentiation. Regulates the circadian clock by repressing the transcriptional activator activity of the CLOCK-BMAL1 heterodimer. The sequence is that of DNA-binding protein inhibitor ID-1 (Id1) from Rattus norvegicus (Rat).